Reading from the N-terminus, the 506-residue chain is NAD(P)H-quinone oxidoreductase subunit 2 (506 aa).

13 consecutive transmembrane segments (helical) span residues 14–34 (AIIP…VDLA), 42–62 (WAPI…ALQW), 79–99 (LAIA…LISW), 108–128 (PIGE…LLCG), 132–152 (LISV…LSGY), 167–187 (LLVG…LYGL), 206–226 (FITS…IAAV), 240–260 (PTPV…AFAI), 276–296 (LLFT…ALAQ), 302–322 (MLAY…VSGT), 330–350 (VLYL…VILF), 374–394 (LGLS…GFFG), and 409–429 (LLVI…ISVI).

This sequence belongs to the complex I subunit 2 family. In terms of assembly, NDH-1 can be composed of about 15 different subunits; different subcomplexes with different compositions have been identified which probably have different functions.

It localises to the cellular thylakoid membrane. The catalysed reaction is a plastoquinone + NADH + (n+1) H(+)(in) = a plastoquinol + NAD(+) + n H(+)(out). It catalyses the reaction a plastoquinone + NADPH + (n+1) H(+)(in) = a plastoquinol + NADP(+) + n H(+)(out). Functionally, NDH-1 shuttles electrons from an unknown electron donor, via FMN and iron-sulfur (Fe-S) centers, to quinones in the respiratory and/or the photosynthetic chain. The immediate electron acceptor for the enzyme in this species is believed to be plastoquinone. Couples the redox reaction to proton translocation, and thus conserves the redox energy in a proton gradient. Cyanobacterial NDH-1 also plays a role in inorganic carbon-concentration. This Prochlorococcus marinus (strain AS9601) protein is NAD(P)H-quinone oxidoreductase subunit 2.